Reading from the N-terminus, the 249-residue chain is Seipin homolog (249 aa).

The Cytoplasmic portion of the chain corresponds to 1-10; the sequence is MGYLVKLFKL. The chain crosses the membrane as a helical span at residues 11–31; it reads VVWMLVIGLFSIPSLVSYVIF. Residues 32 to 212 are Lumenal-facing; it reads YDTVIPHSVI…GMRWFMYTHK (181 aa). A helical transmembrane segment spans residues 213–233; the sequence is VSAFLVFTSLFWFTGITSTII. Residues 234–249 are Cytoplasmic-facing; the sequence is TYLIVSSTSETKATRR.

Belongs to the seipin family.

The protein localises to the endoplasmic reticulum membrane. Involved in lipid metabolism and lipid droplet (LD) morphology, number, and size. Facilitates initiation of LD formation, and ensures that vectorial budding of LDs from the ER is directed towards the cytoplasm. This Schizosaccharomyces pombe (strain 972 / ATCC 24843) (Fission yeast) protein is Seipin homolog.